Reading from the N-terminus, the 481-residue chain is Tripartite motif-containing protein 10 (481 aa).

Residues 16–61 (CPICQGTLREPVTIDCGHNFCRACLTRYCEIPGPDLEESPTCPLCK) form an RING-type zinc finger. A B box-type zinc finger spans residues 94–135 (GEEDVCQEHGEKIYFFCEDDEMQLCVVCREAGEHATHTMRFL). Residues cysteine 99, histidine 102, cysteine 121, and histidine 127 each contribute to the Zn(2+) site. A coiled-coil region spans residues 142–177 (YREQIHKCLKRLRKEREETQEIQSRENKRMQVLLTQ). The 190-residue stretch at 292–481 (REMKMFLEKL…GRGSSFFLSS (190 aa)) folds into the B30.2/SPRY domain.

The protein belongs to the TRIM/RBCC family. In terms of assembly, interacts with IFNAR1; this interaction prevents association of IFNAR1 with TYK2.

It localises to the cytoplasm. Functionally, E3 ligase that plays an essential role in the differentiation and survival of terminal erythroid cells. May directly bind to PTEN and promote its ubiquitination, resulting in its proteasomal degradation and activation of hypertrophic signaling. In addition, plays a role in immune response regulation by repressing the phosphorylation of STAT1 and STAT2 in the interferon/JAK/STAT signaling pathway independent of its E3 ligase activity. Mechanistically, interacts with the intracellular domain of IFNAR1 and thereby inhibits the association of TYK2 and IFNAR1. This Pan troglodytes (Chimpanzee) protein is Tripartite motif-containing protein 10 (TRIM10).